A 128-amino-acid polypeptide reads, in one-letter code: uncharacterized protein (128 aa).

This is an uncharacterized protein from Haemophilus influenzae (strain ATCC 51907 / DSM 11121 / KW20 / Rd).